Consider the following 388-residue polypeptide: Chorismate synthase (388 aa).

Residues Arg39 and Arg45 each contribute to the NADP(+) site. FMN-binding positions include 130 to 132, 251 to 252, Gly296, 311 to 315, and Arg337; these read RSS, NA, and KPIPT.

It belongs to the chorismate synthase family. As to quaternary structure, homotetramer. FMNH2 serves as cofactor.

It catalyses the reaction 5-O-(1-carboxyvinyl)-3-phosphoshikimate = chorismate + phosphate. It participates in metabolic intermediate biosynthesis; chorismate biosynthesis; chorismate from D-erythrose 4-phosphate and phosphoenolpyruvate: step 7/7. Its function is as follows. Catalyzes the anti-1,4-elimination of the C-3 phosphate and the C-6 proR hydrogen from 5-enolpyruvylshikimate-3-phosphate (EPSP) to yield chorismate, which is the branch point compound that serves as the starting substrate for the three terminal pathways of aromatic amino acid biosynthesis. This reaction introduces a second double bond into the aromatic ring system. The chain is Chorismate synthase from Streptococcus sanguinis (strain SK36).